The primary structure comprises 178 residues: ATP synthase subunit b (178 aa).

Residues 30 to 50 traverse the membrane as a helical segment; that stretch reads FFFVLAIFLIVLAVIGTFVVP.

This sequence belongs to the ATPase B chain family. F-type ATPases have 2 components, F(1) - the catalytic core - and F(0) - the membrane proton channel. F(1) has five subunits: alpha(3), beta(3), gamma(1), delta(1), epsilon(1). F(0) has three main subunits: a(1), b(2) and c(10-14). The alpha and beta chains form an alternating ring which encloses part of the gamma chain. F(1) is attached to F(0) by a central stalk formed by the gamma and epsilon chains, while a peripheral stalk is formed by the delta and b chains.

It is found in the cell membrane. Functionally, f(1)F(0) ATP synthase produces ATP from ADP in the presence of a proton or sodium gradient. F-type ATPases consist of two structural domains, F(1) containing the extramembraneous catalytic core and F(0) containing the membrane proton channel, linked together by a central stalk and a peripheral stalk. During catalysis, ATP synthesis in the catalytic domain of F(1) is coupled via a rotary mechanism of the central stalk subunits to proton translocation. In terms of biological role, component of the F(0) channel, it forms part of the peripheral stalk, linking F(1) to F(0). This chain is ATP synthase subunit b, found in Mycobacterium avium (strain 104).